Reading from the N-terminus, the 201-residue chain is Recombination protein RecR (201 aa).

The segment at 60–75 (CSCCGNVDTIDPCTVC) adopts a C4-type zinc-finger fold. Residues 83 to 178 (AVIIVVEDVA…RITRLAHGVP (96 aa)) form the Toprim domain.

Belongs to the RecR family.

May play a role in DNA repair. It seems to be involved in an RecBC-independent recombinational process of DNA repair. It may act with RecF and RecO. This Sinorhizobium medicae (strain WSM419) (Ensifer medicae) protein is Recombination protein RecR.